A 285-amino-acid chain; its full sequence is MSERLALYARLVRIDKPIGTLLLLWPTLWALWMAAGGPPALSVFCIFFAGTFLMRSAGCAINDYADRDFDKHVKRTKERPLTAGKIAAWEAVLIAAVLALIAFALILPLNSLTKWLAVVAAVVAGTYPFFKRFFAIPQAYLGIAFGFGIPMAFAAVQDQVPLVAWVMLLANVFWAVAYDTAYAMVDRDDDLLIGIKTSAITFGRFDVAAIMLCYAAFLVLMGWAGVMLSLGWPYWVGLAAAAVCAGYHYTLIRDRDRMRCFAAFRHNNWLGACVFAGTAVAYAIR.

Helical transmembrane passes span 28–48, 86–106, 110–130, 133–153, 160–180, 207–227, 232–252, and 262–284; these read LWALWMAAGGPPALSVFCIFF, IAAWEAVLIAAVLALIAFALI, NSLTKWLAVVAAVVAGTYPFF, FFAIPQAYLGIAFGFGIPMAF, VPLVAWVMLLANVFWAVAYDT, VAAIMLCYAAFLVLMGWAGVM, WPYWVGLAAAAVCAGYHYTLI, and AAFRHNNWLGACVFAGTAVAYAI.

The protein belongs to the UbiA prenyltransferase family. It depends on Mg(2+) as a cofactor.

The protein localises to the cell inner membrane. It catalyses the reaction all-trans-octaprenyl diphosphate + 4-hydroxybenzoate = 4-hydroxy-3-(all-trans-octaprenyl)benzoate + diphosphate. It functions in the pathway cofactor biosynthesis; ubiquinone biosynthesis. Functionally, catalyzes the prenylation of para-hydroxybenzoate (PHB) with an all-trans polyprenyl group. Mediates the second step in the final reaction sequence of ubiquinone-8 (UQ-8) biosynthesis, which is the condensation of the polyisoprenoid side chain with PHB, generating the first membrane-bound Q intermediate 3-octaprenyl-4-hydroxybenzoate. This Cupriavidus pinatubonensis (strain JMP 134 / LMG 1197) (Cupriavidus necator (strain JMP 134)) protein is 4-hydroxybenzoate octaprenyltransferase.